The following is a 1181-amino-acid chain: 1-phosphatidylinositol 4,5-bisphosphate phosphodiesterase beta-2 (1181 aa).

A PI-PLC X-box domain is found at 312–463 (QDMTQPLNHY…LRGKILIKNK (152 aa)). Histidine 327 is an active-site residue. Positions 328, 357, and 359 each coordinate Ca(2+). The active site involves histidine 374. Ca(2+) is bound at residue glutamate 408. Residues 465 to 534 (NQFSGPASPS…EEIKKMQSDE (70 aa)) are disordered. Positions 503 to 525 (TEVEEEEVVEEEEEEESGNLDEE) are enriched in acidic residues. The 117-residue stretch at 547 to 663 (MSSLVNYIQP…GYLLKHEFMR (117 aa)) folds into the PI-PLC Y-box domain. The C2 domain maps to 666-791 (DKQFNPFSVD…CLRSESNMAL (126 aa)). The tract at residues 847–890 (SGTPVASQSNGAPVSAGNGSTAPGTKATGEEATKEVTEPQTASL) is disordered. A compositionally biased stretch (polar residues) spans 850–869 (PVASQSNGAPVSAGNGSTAP). Over residues 874–883 (TGEEATKEVT) the composition is skewed to basic and acidic residues. Residues 893–940 (LRELKGVVKLQRRHEKELRELERRGARRWEELLQRGAAQLAELQTQAA) are a coiled coil. Phosphoserine is present on serine 950. 2 coiled-coil regions span residues 974–1026 (PRVQ…AELK) and 1075–1141 (HIQE…VRAY). The disordered stretch occupies residues 1149–1181 (EAEDKPERSCEASEESCPQEPLVSKADTQESRL). Residues 1150 to 1159 (AEDKPERSCE) show a composition bias toward basic and acidic residues.

Interacts with RAC1. Forms a complex composed of at least WDR26, a G-beta:gamma unit, and PLCB2. Requires Ca(2+) as cofactor.

It catalyses the reaction a 1,2-diacyl-sn-glycero-3-phospho-(1D-myo-inositol-4,5-bisphosphate) + H2O = 1D-myo-inositol 1,4,5-trisphosphate + a 1,2-diacyl-sn-glycerol + H(+). The catalysed reaction is a 1,2-diacyl-sn-glycero-3-phospho-(1D-myo-inositol) + H2O = 1D-myo-inositol 1-phosphate + a 1,2-diacyl-sn-glycerol + H(+). In terms of biological role, the production of the second messenger molecules diacylglycerol (DAG) and inositol 1,4,5-trisphosphate (IP3) is mediated by activated phosphatidylinositol-specific phospholipase C enzymes. In neutrophils, participates in a phospholipase C-activating N-formyl peptide-activated GPCR (G protein-coupled receptor) signaling pathway by promoting RASGRP4 activation by DAG, to promote neutrophil functional responses. The sequence is that of 1-phosphatidylinositol 4,5-bisphosphate phosphodiesterase beta-2 from Mus musculus (Mouse).